The primary structure comprises 626 residues: Chaperone protein HtpG (626 aa).

The segment at 1–331 is a; substrate-binding; that stretch reads MSETVERHEF…TDDLPLNVSR (331 aa). The b stretch occupies residues 332 to 544; sequence EMLQSTPTLQ…GMGPDLQMQR (213 aa). Residues 545–626 are c; sequence LLRRAGRGFG…GTVAKPAESA (82 aa).

This sequence belongs to the heat shock protein 90 family. In terms of assembly, homodimer.

The protein localises to the cytoplasm. In terms of biological role, molecular chaperone. Has ATPase activity. The sequence is that of Chaperone protein HtpG from Methylorubrum populi (strain ATCC BAA-705 / NCIMB 13946 / BJ001) (Methylobacterium populi).